The following is a 171-amino-acid chain: ATP synthase subunit b (171 aa).

Residues 31 to 51 (FFVVLAIFLVVLAVIGTFVVP) traverse the membrane as a helical segment.

This sequence belongs to the ATPase B chain family. F-type ATPases have 2 components, F(1) - the catalytic core - and F(0) - the membrane proton channel. F(1) has five subunits: alpha(3), beta(3), gamma(1), delta(1), epsilon(1). F(0) has three main subunits: a(1), b(2) and c(10-14). The alpha and beta chains form an alternating ring which encloses part of the gamma chain. F(1) is attached to F(0) by a central stalk formed by the gamma and epsilon chains, while a peripheral stalk is formed by the delta and b chains.

It is found in the cell membrane. Its function is as follows. F(1)F(0) ATP synthase produces ATP from ADP in the presence of a proton or sodium gradient. F-type ATPases consist of two structural domains, F(1) containing the extramembraneous catalytic core and F(0) containing the membrane proton channel, linked together by a central stalk and a peripheral stalk. During catalysis, ATP synthesis in the catalytic domain of F(1) is coupled via a rotary mechanism of the central stalk subunits to proton translocation. Functionally, component of the F(0) channel, it forms part of the peripheral stalk, linking F(1) to F(0). The sequence is that of ATP synthase subunit b from Mycobacterium bovis (strain ATCC BAA-935 / AF2122/97).